Here is a 466-residue protein sequence, read N- to C-terminus: Methylenetetrahydrofolate--tRNA-(uracil-5-)-methyltransferase TrmFO (466 aa).

14 to 19 serves as a coordination point for FAD; it reads GGGLAG.

It belongs to the MnmG family. TrmFO subfamily. Requires FAD as cofactor.

It localises to the cytoplasm. The enzyme catalyses uridine(54) in tRNA + (6R)-5,10-methylene-5,6,7,8-tetrahydrofolate + NADH + H(+) = 5-methyluridine(54) in tRNA + (6S)-5,6,7,8-tetrahydrofolate + NAD(+). The catalysed reaction is uridine(54) in tRNA + (6R)-5,10-methylene-5,6,7,8-tetrahydrofolate + NADPH + H(+) = 5-methyluridine(54) in tRNA + (6S)-5,6,7,8-tetrahydrofolate + NADP(+). Functionally, catalyzes the folate-dependent formation of 5-methyl-uridine at position 54 (M-5-U54) in all tRNAs. The sequence is that of Methylenetetrahydrofolate--tRNA-(uracil-5-)-methyltransferase TrmFO from Brucella canis (strain ATCC 23365 / NCTC 10854 / RM-666).